The following is a 184-amino-acid chain: uncharacterized protein (184 aa).

A signal peptide spans methionine 1–alanine 23.

The protein resides in the secreted. This is an uncharacterized protein from Homo sapiens (Human).